A 180-amino-acid chain; its full sequence is Large ribosomal subunit protein uL5 (180 aa).

The protein belongs to the universal ribosomal protein uL5 family. As to quaternary structure, part of the 50S ribosomal subunit; part of the 5S rRNA/L5/L18/L25 subcomplex. Contacts the 5S rRNA and the P site tRNA. Forms a bridge to the 30S subunit in the 70S ribosome.

Its function is as follows. This is one of the proteins that bind and probably mediate the attachment of the 5S RNA into the large ribosomal subunit, where it forms part of the central protuberance. In the 70S ribosome it contacts protein S13 of the 30S subunit (bridge B1b), connecting the 2 subunits; this bridge is implicated in subunit movement. Contacts the P site tRNA; the 5S rRNA and some of its associated proteins might help stabilize positioning of ribosome-bound tRNAs. The sequence is that of Large ribosomal subunit protein uL5 from Chlamydia caviae (strain ATCC VR-813 / DSM 19441 / 03DC25 / GPIC) (Chlamydophila caviae).